Here is a 708-residue protein sequence, read N- to C-terminus: Leucine-rich repeat neuronal protein 3 (708 aa).

The signal sequence occupies residues 1-22 (MKDMPLQIHVLLGLAITTLVQA). Residues 23 to 69 (VDKKVDCPQLCTCEIRPWFTPTSIYMEASTVDCNDLGLLTFPARLPA) enclose the LRRNT domain. Over 23–628 (VDKKVDCPQL…KEYEKSNTTT (606 aa)) the chain is Extracellular. LRR repeat units follow at residues 70–91 (NTQILLLQTNDIAKIEYSTDFP), 93–114 (NLTGLDLSQNNLSSVTNINVKK), 117–138 (QLLSVYLEENKLTELPEKCLSE), 141–162 (NLQELYINHNLLSTISPGAFIG), 165–186 (NLLRLHLNSNRLQMINSKWFDA), 189–210 (NLEILMIGENPIIRIKDMNFKP), 213–234 (NLRSLVIAGINLTEIPDNALVG), 237–258 (NLESISFYDNRLIKVPHAALQK), 261–282 (NLKFLDLNKNPINRIRRGDFSN), 285–304 (HLKELGINNMPELISIDSLA), 310–332 (DLRKIEATNNPRLSYIHPNAFFR), and 335–358 (KLESLMLNSNALSALYHGTIESLP). 2 N-linked (GlcNAc...) asparagine glycosylation sites follow: N93 and N103. N-linked (GlcNAc...) asparagine glycosylation is present at N223. In terms of domain architecture, LRRCT spans 368 to 421 (NPIRCDCVIRWINMNKTNIRFMEPDSLFCVDPPEFQGQNVRQVHFRDMMEICLP). The N-linked (GlcNAc...) asparagine glycan is linked to N382. An Ig-like C2-type domain is found at 421–514 (PLIAPESFPS…DLKSVMIKVD (94 aa)). C444 and C496 are disulfide-bonded. N-linked (GlcNAc...) asparagine glycans are attached at residues N522, N579, N608, and N625. The Fibronectin type-III domain occupies 523–617 (GSLNIKIRDI…NVTTKGLDPD (95 aa)). Residues 629–649 (LMACLGGLLGIIGVICLISCL) form a helical membrane-spanning segment. The Cytoplasmic portion of the chain corresponds to 650-708 (SPEMNCDGGHSYVRNYLQKPTFALGELYPPLINLWEAGKEKSTSLKVKATVIGLPTNMS).

It localises to the membrane. The polypeptide is Leucine-rich repeat neuronal protein 3 (LRRN3) (Pongo abelii (Sumatran orangutan)).